The chain runs to 415 residues: Plasminogen activator inhibitor 2, macrophage (415 aa).

Asparagine 23, asparagine 75, asparagine 261, and asparagine 339 each carry an N-linked (GlcNAc...) asparagine glycan.

This sequence belongs to the serpin family. Ov-serpin subfamily. As to quaternary structure, interacts with PSMB1. In terms of processing, the signal sequence is not cleaved.

Its subcellular location is the cytoplasm. The protein resides in the secreted. It is found in the extracellular space. In terms of biological role, inhibits urokinase-type plasminogen activator. The monocyte derived PAI-2 is distinct from the endothelial cell-derived PAI-1. Not required for normal murine development or survival. The chain is Plasminogen activator inhibitor 2, macrophage (Serpinb2) from Mus musculus (Mouse).